The primary structure comprises 121 residues: Peptidyl-tRNA hydrolase (121 aa).

The protein belongs to the PTH2 family.

It is found in the cytoplasm. It carries out the reaction an N-acyl-L-alpha-aminoacyl-tRNA + H2O = an N-acyl-L-amino acid + a tRNA + H(+). Its function is as follows. The natural substrate for this enzyme may be peptidyl-tRNAs which drop off the ribosome during protein synthesis. The chain is Peptidyl-tRNA hydrolase from Staphylothermus marinus (strain ATCC 43588 / DSM 3639 / JCM 9404 / F1).